The following is a 735-amino-acid chain: MENNTNPISGQGKCPFSGGAAKQSAGAGTRNSNWWPNQLKLNILRQYSSLSNPMGEEFNYAAAFKSLDLITLKKDISDLMTNSQDWWPADYGHYGPFFIRMAWHSAGTYRVADGRGGAGFGMQRFAPLNSWPDNVNLDKARLLLWPIKQKYGKKISWADLMILAGNCALESMGFKTFGFAGGREDVWEPAEDIYWGSEGKWLDDQRYSGDRELENPLAAVQMGLIYVNPEGPNGNPDPLASARDIRETFARMAMNDEETVALVAGGHTFGKTHGAADPNQYVSAEPAAASIEEQGLGWKNTFGSGSGEHTISSGLEGAWTTTPAKWSHNYLENLFGFEWELTKSPAGAHQWKPKNGAGAGTVPDAHNSSKSHAPTMLTADLALRADPIYEKISRRFLENPAEFEEAFARAWFKLTHRDMGPVARYLGSDVPKEVLIWQDPIPAVNHQLIDDNDITILKAKILDAGFSVSEMVSTAWASASTFRGSDKRGGANGARICLAPQKDWKVNNPIQLSKVLDALKEIQVTFNNAQSIGKQVSIADLIVLTGCVGIEKAAKNIKVPFTPGRTDALQEQTDVASFAVLEPEADGFRNYMKTQYTVSAEEMLIDKAQLLTLTAPELTVLIGGLRVLDVNFNQSKNGLFTNRSGELTNDFFVNLLDFGTTWKASSESQDIFEGRNRKTGELKWTGTRVDLIFGSNSELRALAEVYGCTDSQEKFVKDFVKAWDKVMNLDRFDLV.

The disordered stretch occupies residues 1 to 31 (MENNTNPISGQGKCPFSGGAAKQSAGAGTRN). A compositionally biased stretch (low complexity) spans 17-28 (SGGAAKQSAGAG). The tryptophyl-tyrosyl-methioninium (Trp-Tyr) (with M-252) cross-link spans 103–226 (WHSAGTYRVA…LAAVQMGLIY (124 aa)). The Proton acceptor role is filled by H104. Positions 226–252 (YVNPEGPNGNPDPLASARDIRETFARM) form a cross-link, tryptophyl-tyrosyl-methioninium (Tyr-Met) (with W-103). Position 267 (H267) interacts with heme b. Residues 352–371 (KPKNGAGAGTVPDAHNSSKS) form a disordered region.

This sequence belongs to the peroxidase family. Peroxidase/catalase subfamily. As to quaternary structure, homodimer or homotetramer. The cofactor is heme b. Post-translationally, formation of the three residue Trp-Tyr-Met cross-link is important for the catalase, but not the peroxidase activity of the enzyme.

It catalyses the reaction H2O2 + AH2 = A + 2 H2O. It carries out the reaction 2 H2O2 = O2 + 2 H2O. Bifunctional enzyme with both catalase and broad-spectrum peroxidase activity. In Flavobacterium psychrophilum (strain ATCC 49511 / DSM 21280 / CIP 103535 / JIP02/86), this protein is Catalase-peroxidase.